A 207-amino-acid chain; its full sequence is Thiamine-phosphate synthase (207 aa).

4-amino-2-methyl-5-(diphosphooxymethyl)pyrimidine-binding positions include 37–41 (QYRHK) and Asn69. Residues Asp70 and Asp89 each coordinate Mg(2+). The 4-amino-2-methyl-5-(diphosphooxymethyl)pyrimidine site is built by Ser108 and Lys138. 2-[(2R,5Z)-2-carboxy-4-methylthiazol-5(2H)-ylidene]ethyl phosphate is bound by residues Gly165 and 185–186 (IS).

Belongs to the thiamine-phosphate synthase family. Mg(2+) is required as a cofactor.

It catalyses the reaction 2-[(2R,5Z)-2-carboxy-4-methylthiazol-5(2H)-ylidene]ethyl phosphate + 4-amino-2-methyl-5-(diphosphooxymethyl)pyrimidine + 2 H(+) = thiamine phosphate + CO2 + diphosphate. The catalysed reaction is 2-(2-carboxy-4-methylthiazol-5-yl)ethyl phosphate + 4-amino-2-methyl-5-(diphosphooxymethyl)pyrimidine + 2 H(+) = thiamine phosphate + CO2 + diphosphate. It carries out the reaction 4-methyl-5-(2-phosphooxyethyl)-thiazole + 4-amino-2-methyl-5-(diphosphooxymethyl)pyrimidine + H(+) = thiamine phosphate + diphosphate. Its pathway is cofactor biosynthesis; thiamine diphosphate biosynthesis; thiamine phosphate from 4-amino-2-methyl-5-diphosphomethylpyrimidine and 4-methyl-5-(2-phosphoethyl)-thiazole: step 1/1. Condenses 4-methyl-5-(beta-hydroxyethyl)thiazole monophosphate (THZ-P) and 2-methyl-4-amino-5-hydroxymethyl pyrimidine pyrophosphate (HMP-PP) to form thiamine monophosphate (TMP). In Janthinobacterium sp. (strain Marseille) (Minibacterium massiliensis), this protein is Thiamine-phosphate synthase.